The sequence spans 306 residues: D-alanine--D-alanine ligase (306 aa).

The ATP-grasp domain maps to 104–303; that stretch reads KMLWKAFGLP…FEQLVVKILE (200 aa). Residue 134-189 coordinates ATP; it reads VAKLGLPLMVKPSLEGSSVGLTKVKAVEELKSAVEYALKFDNTILIEEWLAGDELT. Residues aspartate 257, glutamate 270, and asparagine 272 each contribute to the Mg(2+) site.

The protein belongs to the D-alanine--D-alanine ligase family. Requires Mg(2+) as cofactor. It depends on Mn(2+) as a cofactor.

It localises to the cytoplasm. The catalysed reaction is 2 D-alanine + ATP = D-alanyl-D-alanine + ADP + phosphate + H(+). It participates in cell wall biogenesis; peptidoglycan biosynthesis. In terms of biological role, cell wall formation. The chain is D-alanine--D-alanine ligase from Haemophilus influenzae (strain 86-028NP).